The following is a 387-amino-acid chain: Diels-Alderase ORF3 (387 aa).

The protein belongs to the Diels-Alderase family.

It participates in secondary metabolite biosynthesis. Diels-Alderase; part of the gene cluster that mediates the biosynthesis of a tyrosine-derived cytochalasan acting as a fungal signal recognized by resistant rice plants and leads to avirulence in Pi33 resistant rice cultivars. The first step in the pathway is catalyzed by the hybrid PKS-NRPS ACE1, assisted by the enoyl reductase RAP1, that are responsible for fusion of the tyrosine precursor and the polyketide backbone. The polyketide synthase module (PKS) of ACE1 is responsible for the synthesis of the polyketide backbone and the downstream nonribosomal peptide synthetase (NRPS) amidates the carboxyl end of the polyketide with the tyrosine precursor. Because ACE1 lacks a designated enoylreductase (ER) domain, the required activity is provided the enoyl reductase RAP1. Reduction by the hydrolyase ORFZ, followed by dehydration and intra-molecular Diels-Alder cyclization by the Diels-Alderase ORF3 then yield the required isoindolone-fused macrocycle. A number of oxidative steps catalyzed by the tailoring enzymes identified within the cluster, including cytochrome P450 monooxygenases CYP1 to CYP4, the FAD-linked oxidoreductase OXR2 and the short-chain dehydrogenase/reductase OXR1, are further required to afford the final cytochalasans that confer avirulence and which have still to be identified. The monooxygenase CYP1 has been shown to be a site-selective C-18 hydroxylase whereas the function of CYP3 is the site-selective epoxidation of the C-6/C-7 olefin that is present in some intermediate compounds. Finally, SYN2 and RAP2 are not required for avirulence in Pi33 resistant rice cultivars. This Pyricularia oryzae (strain 70-15 / ATCC MYA-4617 / FGSC 8958) (Rice blast fungus) protein is Diels-Alderase ORF3.